A 193-amino-acid chain; its full sequence is Signal peptidase I T (193 aa).

Topologically, residues 1–25 are cytoplasmic; sequence MTEEKNTNTEKTAKKKTNTYLEWGK. The helical transmembrane segment at 26–42 threads the bilayer; sequence AIVIAVLLALLIRHFLF. The Extracellular segment spans residues 43–193; it reads EPYLVEGSSM…FPFNEMRQTK (151 aa). Catalysis depends on residues S51 and K93.

Belongs to the peptidase S26 family.

The protein localises to the cell membrane. The enzyme catalyses Cleavage of hydrophobic, N-terminal signal or leader sequences from secreted and periplasmic proteins.. This Bacillus subtilis (strain 168) protein is Signal peptidase I T (sipT).